The primary structure comprises 564 residues: Adenine deaminase (564 aa).

It belongs to the metallo-dependent hydrolases superfamily. Adenine deaminase family. Mn(2+) serves as cofactor.

The enzyme catalyses adenine + H2O + H(+) = hypoxanthine + NH4(+). The polypeptide is Adenine deaminase (Methylobacterium sp. (strain 4-46)).